A 457-amino-acid chain; its full sequence is UDP-N-acetylmuramate--L-alanine ligase (457 aa).

Residue 109-115 (GTDGKTT) participates in ATP binding.

This sequence belongs to the MurCDEF family.

Its subcellular location is the cytoplasm. It carries out the reaction UDP-N-acetyl-alpha-D-muramate + L-alanine + ATP = UDP-N-acetyl-alpha-D-muramoyl-L-alanine + ADP + phosphate + H(+). It functions in the pathway cell wall biogenesis; peptidoglycan biosynthesis. Functionally, cell wall formation. In Thermotoga neapolitana (strain ATCC 49049 / DSM 4359 / NBRC 107923 / NS-E), this protein is UDP-N-acetylmuramate--L-alanine ligase.